The following is a 480-amino-acid chain: uncharacterized protein (480 aa).

Positions 131–207 constitute a PUA domain; it reads KKIIKIKNDV…KVVKVRFFIK (77 aa).

The protein in the C-terminal section; belongs to the PAPS reductase family.

This is an uncharacterized protein from Methanocaldococcus jannaschii (strain ATCC 43067 / DSM 2661 / JAL-1 / JCM 10045 / NBRC 100440) (Methanococcus jannaschii).